A 67-amino-acid polypeptide reads, in one-letter code: Light-harvesting protein B-870 alpha chain (67 aa).

An N-formylmethionine; in strain DSM 149 and DSM 151 modification is found at Met-1. At 1–12 (MWRIWRLFDPMR) the chain is on the cytoplasmic side. A helical membrane pass occupies residues 13 to 33 (AMVAQAVFLLGLAVLIHLMLL). His-29 contributes to the a bacteriochlorophyll binding site. The Periplasmic segment spans residues 34 to 67 (GTNKYNWLDGAKKAPAATAVAPVPAEVTSLAQAK).

The protein belongs to the antenna complex alpha subunit family. In terms of assembly, an alpha/beta heterodimer. The core complex is formed by different alpha and beta chains, binding bacteriochlorophyll molecules, and arranged most probably in tetrameric structures disposed around the reaction center. The non-pigmented gamma chains may constitute additional components. Post-translationally, the N-terminus is blocked.

It localises to the cell inner membrane. Functionally, antenna complexes are light-harvesting systems, which transfer the excitation energy to the reaction centers. This is Light-harvesting protein B-870 alpha chain (pufA) from Rubrivivax gelatinosus (Rhodocyclus gelatinosus).